The chain runs to 106 residues: Small ribosomal subunit protein uS10 (106 aa).

It belongs to the universal ribosomal protein uS10 family. As to quaternary structure, part of the 30S ribosomal subunit.

Involved in the binding of tRNA to the ribosomes. The protein is Small ribosomal subunit protein uS10 of Prochlorococcus marinus (strain MIT 9303).